The following is a 172-amino-acid chain: MASKAIFFFFVSAVCLSSLAGVAIADADDFDRFQIQGSVYCDTCRVQFVTRLSKFLEGAKVKLECRSRTNGTVTLTKEAVTDKTGSYRMEVTGDHEEEVCELVLVESPDSGCSDVSKEAYLRNAAKISLTANDGIVSHETRIVNPLGFMVQTPSAECPAAFKELGIVPDVTF.

Positions 1–27 are cleaved as a signal peptide; it reads MASKAIFFFFVSAVCLSSLAGVAIADA. 3 disulfides stabilise this stretch: C41-C112, C44-C157, and C65-C100. The N-linked (GlcNAc...) asparagine glycan is linked to N70.

This sequence belongs to the Ole e I family.

The protein localises to the secreted. The sequence is that of Pollen-specific protein-like At4g18596 from Arabidopsis thaliana (Mouse-ear cress).